Consider the following 723-residue polypeptide: Polyribonucleotide nucleotidyltransferase (723 aa).

Asp488 and Asp494 together coordinate Mg(2+). Positions 555 to 614 (PRMITMKIHPDKIREVIGKGGSTIQALTKETGTTIDIQEDGTITIASTSTDGMAEAKRRI) constitute a KH domain. Residues 624-692 (GKIYAGTVLK…EKGRLRLSLK (69 aa)) enclose the S1 motif domain. The segment at 701–723 (SISPINAGEAAAPAAPAEGSEQQ) is disordered. Positions 707–723 (AGEAAAPAAPAEGSEQQ) are enriched in low complexity.

This sequence belongs to the polyribonucleotide nucleotidyltransferase family. It depends on Mg(2+) as a cofactor.

It localises to the cytoplasm. It carries out the reaction RNA(n+1) + phosphate = RNA(n) + a ribonucleoside 5'-diphosphate. Involved in mRNA degradation. Catalyzes the phosphorolysis of single-stranded polyribonucleotides processively in the 3'- to 5'-direction. The polypeptide is Polyribonucleotide nucleotidyltransferase (Cupriavidus necator (strain ATCC 17699 / DSM 428 / KCTC 22496 / NCIMB 10442 / H16 / Stanier 337) (Ralstonia eutropha)).